The following is a 310-amino-acid chain: Ribosomal RNA small subunit methyltransferase H (310 aa).

S-adenosyl-L-methionine-binding positions include 32–34 (GGH), aspartate 52, phenylalanine 79, aspartate 100, and glutamine 107.

The protein belongs to the methyltransferase superfamily. RsmH family.

Its subcellular location is the cytoplasm. The enzyme catalyses cytidine(1402) in 16S rRNA + S-adenosyl-L-methionine = N(4)-methylcytidine(1402) in 16S rRNA + S-adenosyl-L-homocysteine + H(+). Specifically methylates the N4 position of cytidine in position 1402 (C1402) of 16S rRNA. The protein is Ribosomal RNA small subunit methyltransferase H of Bacillus cereus (strain G9842).